The following is a 103-amino-acid chain: Small ribosomal subunit protein uS10 (103 aa).

It belongs to the universal ribosomal protein uS10 family. As to quaternary structure, part of the 30S ribosomal subunit.

In terms of biological role, involved in the binding of tRNA to the ribosomes. In Ruminiclostridium cellulolyticum (strain ATCC 35319 / DSM 5812 / JCM 6584 / H10) (Clostridium cellulolyticum), this protein is Small ribosomal subunit protein uS10.